The sequence spans 209 residues: Uracil phosphoribosyltransferase (209 aa).

5-phospho-alpha-D-ribose 1-diphosphate contacts are provided by residues Arg79, Arg104, and 131–139; that span reads DPMLATGGS. Uracil is bound by residues Ile194 and 199 to 201; that span reads GDA. Asp200 lines the 5-phospho-alpha-D-ribose 1-diphosphate pocket.

It belongs to the UPRTase family. The cofactor is Mg(2+).

The catalysed reaction is UMP + diphosphate = 5-phospho-alpha-D-ribose 1-diphosphate + uracil. The protein operates within pyrimidine metabolism; UMP biosynthesis via salvage pathway; UMP from uracil: step 1/1. With respect to regulation, allosterically activated by GTP. In terms of biological role, catalyzes the conversion of uracil and 5-phospho-alpha-D-ribose 1-diphosphate (PRPP) to UMP and diphosphate. This chain is Uracil phosphoribosyltransferase, found in Finegoldia magna (strain ATCC 29328 / DSM 20472 / WAL 2508) (Peptostreptococcus magnus).